A 281-amino-acid polypeptide reads, in one-letter code: Oxidase pynE (281 aa).

This sequence belongs to the avfA family.

The protein operates within secondary metabolite biosynthesis. Functionally, oxidase; part of the gene cluster that mediates the biosynthesis of pyranonigrins, a family of antioxidative compounds. The first step of pyranonigrins biosynthesis is performed by the hybrid PKS-NRPS synthetase that condenses 6 malonyl-CoA units to an acetyl starter unit, to form a 1,3,5-trioxotetradecane-6,8-dienyl-ACP. The enoyl reductase (ER) domain of pynA is likely to be functional during the first two rounds of polyketide chain extension, to generate the saturated C-C bonds of the alkyl side chain. PynA subsequently forms the amide bond between the acyl chain and L-serine. Although pynA has a terminal reductase domain, it appears to require the thioesterase pynI for the release of the straight-chain intermediate from pynA via the formation of a tetramic acid pyranonigrin J. The methyltransferase pynC then coverts pyranonigrin J to pyranonigrin I via N-methylation. The FAD-dependent monooxygenase pynG catalyzes an epoxidation-mediated cyclization to form the dihydro-gamma-pyrone moiety, followed by pynD-catalyzed oxidation of the alcohol to the ketone and enolization to yield the characteristic tetramic acid-fused gamma-pyrone core of pyranonigrin H. Pyranonigrin H is substrate of pynH for dehydration-mediated exo-methylene formation from the serine side chain to produce pyranonigrin E, before the oxidase pynE reduces the exo-methylene of pyranonigrin E into a pendant methyl to form pyranonigrin G. The FAD-linked oxidoreductase pynB performs the reverse reaction and converts pyranonigrin G back to pyranonigrin E. This chain is Oxidase pynE, found in Aspergillus niger (strain ATCC MYA-4892 / CBS 513.88 / FGSC A1513).